The sequence spans 778 residues: Acyl-homoserine lactone acylase PvdQ (778 aa).

The N-terminal stretch at 1 to 25 is a signal peptide; sequence MTISRQFTGLTLAGLFLGLSLSAQA. The propeptide at 196-218 is spacer peptide; sequence IENNARAYQLADTRLQRFALDRG. Ser-219 serves as the catalytic Nucleophile.

It belongs to the peptidase S45 family. As to quaternary structure, heterodimer of an alpha subunit and a beta subunit processed from the same precursor.

Its subcellular location is the periplasm. The enzyme catalyses an N-acyl-L-homoserine lactone + H2O = L-homoserine lactone + a carboxylate. In terms of biological role, catalyzes the deacylation of acyl-homoserine lactone (AHL or acyl-HSL), releasing homoserine lactone (HSL) and the corresponding fatty acid. Possesses a specificity for the degradation of long-chain acyl-HSLs (side chains of 11 to 14 carbons in length). The sequence is that of Acyl-homoserine lactone acylase PvdQ (pvdQ) from Pseudomonas fluorescens (strain Pf0-1).